A 126-amino-acid polypeptide reads, in one-letter code: MKAFLFAVLAAVLCVERAHTLICFSCSDASSNWACLTPVKCAENEEHCVTTYVGVGIGGKSGQSISKGCSPVCPSAGINLGIAAASVYCCDSFLCNISGSSSVKASYAVLALGILVSFVYVLRARE.

A signal peptide spans 1-20 (MKAFLFAVLAAVLCVERAHT). The 78-residue stretch at 21 to 98 (LICFSCSDAS…CCDSFLCNIS (78 aa)) folds into the UPAR/Ly6 domain. 5 cysteine pairs are disulfide-bonded: C23–C48, C26–C35, C41–C69, C73–C89, and C90–C95. Residue N96 is glycosylated (N-linked (GlcNAc...) asparagine). Residue S98 is the site of GPI-anchor amidated serine attachment. Residues 99–126 (GSSSVKASYAVLALGILVSFVYVLRARE) constitute a propeptide, removed in mature form.

As to expression, expressed by thymic blast cells.

It is found in the cell membrane. The polypeptide is Lymphocyte antigen 6E (LY6E) (Gallus gallus (Chicken)).